Consider the following 79-residue polypeptide: Conotoxin MIVA (79 aa).

Residues 1–21 form the signal peptide; sequence MGMRMMFTVFLLVVLATTVVS. A propeptide spanning residues 22 to 38 is cleaved from the precursor; that stretch reads IPSDRASDGRNAVVHER. Pro-40 is modified (4-hydroxyproline). 4-carboxyglutamate is present on Glu-41. O-linked (HexNAc...) threonine glycans are attached at residues Thr-45 and Thr-47. 4-hydroxyproline is present on residues Pro-55, Pro-60, Pro-61, Pro-69, Pro-70, and Pro-74. A Proline amide modification is found at Pro-74. Residues 75–79 constitute a propeptide that is removed on maturation; the sequence is GRRND.

O-linked glycan consists of Hex4-HexNAc2 hexasaccharide. Post-translationally, contains 3 disulfide bonds. As to expression, expressed by the venom duct.

Its subcellular location is the secreted. Probable neurotoxin with ion channel inhibitor activity. The chain is Conotoxin MIVA from Conus magus (Magical cone).